A 172-amino-acid chain; its full sequence is uncharacterized protein (172 aa).

A signal peptide spans 1 to 29 (MKKKQVMLALTAAAGLGLTALHSAPAAKA). 2 SH3b domains span residues 42–105 (SDTY…MKTA) and 112–172 (KQTA…LQMR).

This is an uncharacterized protein from Bacillus subtilis (strain 168).